The primary structure comprises 83 residues: Cell division topological specificity factor (83 aa).

This sequence belongs to the MinE family.

Functionally, prevents the cell division inhibition by proteins MinC and MinD at internal division sites while permitting inhibition at polar sites. This ensures cell division at the proper site by restricting the formation of a division septum at the midpoint of the long axis of the cell. The protein is Cell division topological specificity factor of Buchnera aphidicola subsp. Schizaphis graminum (strain Sg).